The sequence spans 369 residues: MAFAGLKKQINKANQYMTEKMGGAEGTKLDMDFMDMERKTDVTVELVEELQLKTKEFLQPNPTARAKMAAVKGISKLSGQAKSNTYPQPEGLLAECMLTYGKKLGEDNSVFAQALVEFGESLKQMADVKYSLDDNIKQNFLEPLHHMQMKDLKEVMHHRKKLQGRRLDFDCKRRRQAKDDEIRGAEDKFAESLQLAQVGMFNLLENDTEHVSQLVTFAEALYDFHSQCADVLRGLQETLQEKRSEAESRPRNEFVPKTLLDLNLDGGGGGLIDDGTPSHISSSASPLPSPMRSPAKSMAVTPSRQQQPCCQALYDFDPENPGELGFKENDIITLLNRVDDNWYEGAVNGRTGYFPQSYVQVQVPLPNGN.

Residues 18 to 248 (TEKMGGAEGT…LQEKRSEAES (231 aa)) form the BAR domain. A coiled-coil region spans residues 227–247 (QCADVLRGLQETLQEKRSEAE). Residues 275–294 (GTPSHISSSASPLPSPMRSP) are compositionally biased toward low complexity. The interval 275 to 296 (GTPSHISSSASPLPSPMRSPAK) is disordered. The SH3 domain occupies 305–364 (QQQPCCQALYDFDPENPGELGFKENDIITLLNRVDDNWYEGAVNGRTGYFPQSYVQVQVP).

This sequence belongs to the endophilin family.

It is found in the cytoplasm. It localises to the membrane. Required presynaptically at the neuromuscular junction. Implicated in synaptic vesicle endocytosis. This Drosophila pseudoobscura pseudoobscura (Fruit fly) protein is Endophilin-A.